Here is a 144-residue protein sequence, read N- to C-terminus: MDIIEILEHLPHRYPFLLVDRVLEIEPGKSIHAYKNVTINEPFFVGHFPHHPVMPGVLIMEALAQAAGILSFKSMDEKPSPDTVFYFAGIDEARFKKPVMPGDQLHLHIEIERQMRGVWKYKAEARVDGQLAASAKLMCAKRDL.

H47 is an active-site residue.

Belongs to the thioester dehydratase family. FabZ subfamily.

The protein resides in the cytoplasm. It catalyses the reaction a (3R)-hydroxyacyl-[ACP] = a (2E)-enoyl-[ACP] + H2O. Involved in unsaturated fatty acids biosynthesis. Catalyzes the dehydration of short chain beta-hydroxyacyl-ACPs and long chain saturated and unsaturated beta-hydroxyacyl-ACPs. The sequence is that of 3-hydroxyacyl-[acyl-carrier-protein] dehydratase FabZ from Dechloromonas aromatica (strain RCB).